The primary structure comprises 1927 residues: MEKYFGEKQERFSFRKLSVGLVSATISSLFFMSVLASSSVDAQETAGVHYKYVADSELSSEEKKQLVYDIPTYVENDDETYYLVYKLNSQNQLAELPNTGSKNERQALVAGASLAALGILIFAVSKKKVKNKTVLHLVLVAGIGNGVLVSVHALENHLLLNYNTDYELTSGEKLPLPKEISGYTYIGYIKEGKTTSDFEVSNQEKSAATPTKQQKVDYNVTPNFVDHPSTVQAIQEQTPVSSTKPTEVQVVEKPFSTELINPRKEEKQSSDSQEQLAEHKNLETKKEEKISPKEKTGVNTLNPQDEVLSGQLNKPELLYREETIETKIDFQEEIQENPDLAEGTVRVKQEGKLGKKVEIVRIFSVNKEEVSREIVSTSTTAPSPRIVEKGTKKTQVIKEQPETGVEHKDVQSGAIVEPAIQPELPEAVVSDKGEPEVQPTLPEAVVTDKGEPAVQPELPEAVVSDKGEPEQVAPLPEYKGNIEQVKPETPVEKTKEQGPEKTEEVPVKPTEETPVNPNEGTTEGTSIQGAENPVQPAEDTQTNSGKIANENTGEVSNKPSDSKPPVEESNQPEKNGTATKPENSGNTTSENGQTEPEPSNGNSTEDVSTKSNTSNSNGNEEIKQENELDPDKKVEDPEKTLELRNVSDLELYSLSNGTYKQHISLEQVPSNPNSYFVKVKSSSFKDVYLPVASISEGRKNDKILYKITAKVEKLQQEIESRYKDNFTFYLAKKGTEETTNFTSFSNLVKAINQNLSGTYHLGASLNANEVELSTDDKSYIKGTFTGQLIGEKDGKHYAIYNLKKPLFENLSGATVEKLSLKNVAISGKNDIGSLANEATNGTKIKQVHVDGVLAGERGVGGLLAKADQSSIAESSFKGRIVNTYETTDSYNIGGLVGHLTGKNASIAKSKATVTISSNTNRSDQTVGGLAGLVDRDAQIQDSYAEGDINNVKHFGRVAGVAGNLWDRTSGDVRHAGSLTNVLSDVNVTNGNAITGYHYTGMKVANTFSSKANRVFNVTLEKNEVVSKESFEERGTMLDASQIASKKAEINLITPPIVEPLSTSGKKDSDFSKIAHYQANRALVYKNIEKLLPFYNKATIVKYGNLVKENSILYQKELLSAVMMKDDQVITDIISNKQTANKLLLHYKDHSSEKFDLRYQADFANLAEYSIGDSGLLYTPNQFLYHQDSIINQVLPELNRVNYQSDAVRNTLGISPEVKLTELYLEEQFTKTKEHLAENLKKLLSSDAGLVTDNEVMTGYIIDKIKRNKEALLLGMSYLERWYNFSYGQVNVKDLVMYHPDFFGKGNTSPLDTLIELGKSGFNNLLAKNNVDTYAISLASHHGTTDLFSTLENYRKVFLPDKTNNDWFKSQTKAYIVEEKSNIEEVKTKQGLVGTKYSIGVYDRITSATWKYRNMVLPLLTLPERSVFVISTISSLGFGAYDRYRNKEHQANGDLNSFVEKSAHETAERQRDHYDYWYRILDEKGREKLYRNILLYDAYKFGTNHTEGKATEVADFDSPNPAMKHFFGPVGNKVGHNGHGAYATGDAVYYMGYRMLDKDGAITYTHEMTHNSDQDIYLGGYGRRSGLGPEFFAKGLLQAPDQPSDATITINSILKHSKSDSKEGERLQVLDPTTRFKDATDLQKYVHNMFDVVYMLEYLEGKSIVKKLNVYQKIEALRKIENQYLTDPADGNDVYATNVVKNLTEDEAKKLTSFDSLIDNNILSAREYKAGTYERNGYFTIKLFAPIFSALSGEKGTPGDLMGRRIAFELLAAKGFKDGMVPYISNQYEEDAKQQGQTINLYGKERGLVTDELVLKKVFDGKYKTWAEFKTAMYQERVDQFGNLKQVTFKDPTKPWPRYGTKTINNVDELQKLMDEAVLQDAKERNYYYWNNYNPETDSAVHKLKRAIFKAYLDQTNDFRRSIFENKK.

An N-terminal signal peptide occupies residues 1–42 (MEKYFGEKQERFSFRKLSVGLVSATISSLFFMSVLASSSVDA). Positions 43–99 (QETAGVHYKYVADSELSSEEKKQLVYDIPTYVENDDETYYLVYKLNSQNQLAELPNT) are excised as a propeptide. The LPXTG sorting signal motif lies at 96-100 (LPNTG). Thr99 bears the Pentaglycyl murein peptidoglycan amidated threonine mark. Transmembrane regions (helical) follow at residues 106 to 125 (QALV…FAVS) and 132 to 154 (KTVL…VHAL). Residues 155–1927 (ENHLLLNYNT…FRRSIFENKK (1773 aa)) are Extracellular-facing. The segment covering 235–246 (QEQTPVSSTKPT) has biased composition (polar residues). 3 disordered regions span residues 235–305 (QEQT…NPQD), 371–394 (SREI…TKKT), and 426–640 (EAVV…PEKT). A compositionally biased stretch (basic and acidic residues) spans 276-296 (LAEHKNLETKKEEKISPKEKT). The G5 domain occupies 314 to 393 (KPELLYREET…PRIVEKGTKK (80 aa)). 3 tandem repeats follow at residues 419–435 (AIQP…KGEP), 436–452 (EVQP…KGEP), and 453–469 (AVQP…KGEP). The interval 419 to 469 (AIQPELPEAVVSDKGEPEVQPTLPEAVVTDKGEPAVQPELPEAVVSDKGEP) is 3 X 17 AA approximate tandem repeats. Basic and acidic residues predominate over residues 485–511 (VKPETPVEKTKEQGPEKTEEVPVKPTE). Polar residues-rich tracts occupy residues 516-529 (NPNE…SIQG), 538-559 (EDTQ…SNKP), and 568-606 (ESNQ…STED). The segment covering 609 to 619 (TKSNTSNSNGN) has biased composition (low complexity). Residues 620-640 (EEIKQENELDPDKKVEDPEKT) are compositionally biased toward basic and acidic residues. Position 1565 (His1565) interacts with Zn(2+). Glu1566 is a catalytic residue. Zn(2+) contacts are provided by His1569 and Glu1589.

This sequence belongs to the peptidase M26 family. The cofactor is Zn(2+). Post-translationally, the Gram-positive cell-wall anchor motif LPXTG is located in the N-terminal part, in contrast to such motifs in other known streptococcal and staphylococcal proteins. The protease could be cleaved by the sortase and anchored in the membrane via the two potential N-terminal transmembrane domains, whereas the propeptide located prior to the LPXTG motif would remain attached to the cell wall peptidoglycan by an amide bond.

The protein resides in the secreted. It localises to the cell wall. The protein localises to the membrane. The enzyme catalyses Cleavage of Pro-|-Thr bond in the hinge region of the heavy chain of human IgA.. In terms of biological role, zinc metalloproteinase which cleaves human immunoglobulin A1 (IgA1) in the hinge region, rendering it less efficient in coating the surface of colonizing or invading pneumococci. May be responsible for pneumococcal infection and is potentially involved in distinct stages of pneumococcal disease. The protein is Immunoglobulin A1 protease (iga) of Streptococcus pneumoniae.